The primary structure comprises 106 residues: Putative double-stranded DNA mimic protein VV1_3059 (106 aa).

The protein belongs to the putative dsDNA mimic protein family.

May act as a double-stranded DNA (dsDNA) mimic. Probably regulates the activity of a dsDNA-binding protein. The sequence is that of Putative double-stranded DNA mimic protein VV1_3059 from Vibrio vulnificus (strain CMCP6).